The sequence spans 265 residues: Pancreas transcription factor 1 subunit alpha (265 aa).

Residues 115 to 167 enclose the bHLH domain; it reads QLRQAANVRERRRMQSINDAFEGLRSHIPTLPYEKRLSKVDTLRLAIGYINFL.

The protein localises to the nucleus. Functionally, transcription factor implicated in the cell fate determination in various organs. Binds to the E-box consensus sequence 5'-CANNTG-3'. Required for exocrine pancreatic development. Plays a central role in directing the differentiation of retinal progenitors towards horizontal and amacrine fates. The chain is Pancreas transcription factor 1 subunit alpha (ptf1a) from Danio rerio (Zebrafish).